The sequence spans 269 residues: MAMVPEITCDEVDFYRDDDDRQFYEADGPNQKKGYFQYPDLCSKESLLEEDGIQLKFTTQPHQFHQTVMVIVAIEKMKHLNGLSSQFFQDNDLMNIFTNIFQEEPITFKNCDIYESDSSFRLVSSQDCTIQDINQKCLALSKASELRALHLNGRNISQQVIFSMKYLLGDIGSQKTHVVLCIKKNNLYLSCVRRGEKPILQLEQIANFPSINVEKRFIFNKVEINNTTEFESAEYPNWYISTSQMDEQPVFLGNIRGGKDITDFILADF.

Positions 1–112 (MAMVPEITCD…EEPITFKNCD (112 aa)) are excised as a propeptide.

The protein belongs to the IL-1 family. As to quaternary structure, monomer. In its precursor form, weakly interacts with full-length MEFV; the mature cytokine does not interact at all. Interacts with integrins ITGAV:ITGBV and ITGA5:ITGB1; integrin-binding is required for IL1B signaling. Interacts with cargo receptor TMED10; the interaction is direct and is required for the secretion of IL1B mature form. Interacts with HSP90AB1; the interaction facilitates cargo translocation into the ERGIC. Interacts with HSP90B1; the interaction facilitates cargo translocation into the ERGIC.

It is found in the cytoplasm. The protein localises to the cytosol. It localises to the secreted. Its subcellular location is the lysosome. The protein resides in the extracellular exosome. Potent pro-inflammatory cytokine. Initially discovered as the major endogenous pyrogen, induces prostaglandin synthesis, neutrophil influx and activation, T-cell activation and cytokine production, B-cell activation and antibody production, and fibroblast proliferation and collagen production. Promotes Th17 differentiation of T-cells. Synergizes with IL12/interleukin-12 to induce IFNG synthesis from T-helper 1 (Th1) cells. Plays a role in angiogenesis by inducing VEGF production synergistically with TNF and IL6. Involved in transduction of inflammation downstream of pyroptosis: its mature form is specifically released in the extracellular milieu by passing through the gasdermin-D (GSDMD) pore. This chain is Interleukin-1 beta (IL1B), found in Trichosurus vulpecula (Brush-tailed possum).